Here is a 348-residue protein sequence, read N- to C-terminus: Lysophosphatidic acid receptor 2 (348 aa).

Residues 1 to 30 (MGQCYYNETIGFFYNNSGKELSLHWRPKDV) are Extracellular-facing. N-linked (GlcNAc...) asparagine glycosylation is found at Asn-7 and Asn-15. A helical transmembrane segment spans residues 31-51 (VVVALGLTVSVLVLLTNLLVI). The Cytoplasmic portion of the chain corresponds to 52–66 (AAIASNRRFHQPIYY). The chain crosses the membrane as a helical span at residues 67 to 87 (LLGNLAAADLFAGMAYLFLMF). The Extracellular segment spans residues 88 to 104 (HTGPRTARLSIKGWFLR). A helical transmembrane segment spans residues 105–124 (QGLLDTSLTASVATLLAIAV). Residues 125–144 (ERHRSVMAVQLHSRLPRGRV) lie on the Cytoplasmic side of the membrane. Residues 145–165 (VTLIVGVWAAALGLGLLPAHF) form a helical membrane-spanning segment. Topologically, residues 166–185 (WHCLCDLDSCSRMVPLFSRS) are extracellular. Residues 186 to 206 (YLAAWALSSLLVFLLMVAVYT) traverse the membrane as a helical segment. The Cytoplasmic segment spans residues 207-239 (RIFFYVRRRVERMAEHVSCHPRYRETTLSLVKT). The chain crosses the membrane as a helical span at residues 240–260 (VVIILGAFVVCWTPGQVVLLL). Topologically, residues 261 to 270 (DGLDCKSCNV) are extracellular. A helical membrane pass occupies residues 271–291 (LAVEKYFLLLAEANSLVNAVV). The Cytoplasmic segment spans residues 292 to 348 (YSCRDAEMRRTFRRLLCCMCLRWSSHKSARYSASAQTGASTRIMLPENGRPLMDSTL). Residue Cys-308 is the site of S-palmitoyl cysteine attachment. The short motif at 345–348 (DSTL) is the PDZ-binding element.

Belongs to the G-protein coupled receptor 1 family. As to quaternary structure, interacts with SLC9A3R2/NHERF2, MAGI3 and PLCB3. Interacts with RALA and GRK2. Most abundantly expressed in testes, kidney, and embryonic brain. Other organs also express the transcript, including heart, lung, spleen, thymus, stomach, and adult brain. Several have little or no expression, including liver, small intestine, and skeletal muscle.

It is found in the cell surface. The protein localises to the cell membrane. Its function is as follows. Receptor for lysophosphatidic acid (LPA), a mediator of diverse cellular activities. Seems to be coupled to the G(i)/G(o), G(12)/G(13), and G(q) families of heteromeric G proteins. Plays a key role in phospholipase C-beta (PLC-beta) signaling pathway Stimulates phospholipase C (PLC) activity in a manner that is independent of RALA activation. This Mus musculus (Mouse) protein is Lysophosphatidic acid receptor 2.